Consider the following 1305-residue polypeptide: Myosin-IIIb (1305 aa).

A Protein kinase domain is found at 15–281 (WEIIETIGKG…VTHLLDHPFI (267 aa)). Residues 21-29 (IGKGTYGKV) and K44 each bind ATP. D144 functions as the Proton acceptor in the catalytic mechanism. In terms of domain architecture, Myosin motor spans 331-1046 (CLEDDLVNLE…HVEQLNLLLR (716 aa)). Positions 927 to 949 (LMDLLSKMVVGQPHFIRCIKPND) are actin-binding. 2 IQ domains span residues 1048–1077 (VMGRVVMLQAYTKGWLGARRYKRAKEKREK) and 1075–1104 (REKGAITIQSAWRGYDARRKLKQRSRRRSE). Disordered stretches follow at residues 1093 to 1164 (RKLK…VTSG) and 1200 to 1233 (SPCEDSLKPGSEEGLSQKQRAPRRRCQQPKMLSS).

In the C-terminal section; belongs to the TRAFAC class myosin-kinesin ATPase superfamily. Myosin family. The protein in the N-terminal section; belongs to the protein kinase superfamily. STE Ser/Thr protein kinase family. As to quaternary structure, interacts (via C-terminus) with ESPN. Interacts (via C-terminus) with ESPNL. As to expression, expressed in the cochlear hair cells (at protein level). Expressed in utricle hair bundles (at protein level).

Its subcellular location is the cytoplasm. The protein resides in the cytoskeleton. It is found in the cell projection. The protein localises to the stereocilium. It carries out the reaction L-seryl-[protein] + ATP = O-phospho-L-seryl-[protein] + ADP + H(+). It catalyses the reaction L-threonyl-[protein] + ATP = O-phospho-L-threonyl-[protein] + ADP + H(+). In terms of biological role, probable actin-based motor with a protein kinase activity. Required for normal cochlear hair bundle development and hearing. Plays an important role in the early steps of cochlear hair bundle morphogenesis. Influences the number and lengths of stereocilia to be produced and limits the growth of microvilli within the forming auditory hair bundles thereby contributing to the architecture of the hair bundle, including its staircase pattern. Involved in the elongation of actin in stereocilia tips by transporting the actin regulatory factor ESPN to the plus ends of actin filaments. This is Myosin-IIIb (Myo3b) from Mus musculus (Mouse).